The primary structure comprises 93 residues: Cell division protein CrgA (93 aa).

A run of 2 helical transmembrane segments spans residues 31–51 and 70–90; these read VWFV…LMVF and LGPW…LLTM.

Belongs to the CrgA family.

Its subcellular location is the cell membrane. Functionally, involved in cell division. The polypeptide is Cell division protein CrgA (Mycobacterium marinum (strain ATCC BAA-535 / M)).